The primary structure comprises 337 residues: Probable cytosolic iron-sulfur protein assembly protein 1 (337 aa).

WD repeat units follow at residues 11–50 (LHNDKVWSIDFEPVRGLLATGSTDRAIKVLQLKNGKENLL), 57–96 (VHKKAVRSVAWRPHSDLLAAGSFDSTISIWTQSDLDLEEG), 109–148 (GHENEVKGISWSQDGCLLATCSRDKSVWIWETDEAGEEYE), 155–194 (EHSQDVKHVVWHTKHNLLASSSYDDTVRIWKDYDDDWECA), 199–240 (GHEG…EDDQ), 252–290 (AHRSQIYGVAWSPSGRIASVGADGVLAVYKEKQNDSEVS), and 301–337 (AHTVYEINTVKWVNIDGKEMLITAGDDGRVNLWNYQD).

The protein belongs to the WD repeat CIA1 family. As to quaternary structure, interacts with NAR1.

The protein localises to the cytoplasm. Its subcellular location is the nucleus. Essential component of the cytosolic iron-sulfur (Fe/S) protein assembly machinery. Required for the maturation of extramitochondrial Fe/S proteins. The chain is Probable cytosolic iron-sulfur protein assembly protein 1 from Candida glabrata (strain ATCC 2001 / BCRC 20586 / JCM 3761 / NBRC 0622 / NRRL Y-65 / CBS 138) (Yeast).